Consider the following 62-residue polypeptide: Alpha-conotoxin-like Qc1.2 (62 aa).

A signal peptide spans 1–21 (MGMRMMFTVFLLVALATTVAS). The propeptide occupies 22-48 (FTLDRASNGRNAAADDKPSDWIALAIK). Position 49 is a pyrrolidone carboxylic acid (glutamine 49). Cystine bridges form between cysteine 50-cysteine 56 and cysteine 51-cysteine 61.

This sequence belongs to the conotoxin A superfamily. In terms of tissue distribution, expressed by the venom duct.

It is found in the secreted. Alpha-conotoxins bind to the nicotinic acetylcholine receptors (nAChR) and inhibit them. This synthetic peptide (10 uM) selectively, but weakly inhibits both rat neuronal alpha-3-beta-2/CHRNA3-CHRNB2 (63%) and alpha-3-beta-4/CHRNA3-CHRNB4 (37%) subtypes of nAChR. The protein is Alpha-conotoxin-like Qc1.2 of Conus quercinus (Oak cone).